Consider the following 167-residue polypeptide: ATP synthase subunit b (167 aa).

The chain crosses the membrane as a helical span at residues 10–30 (TFFFQLANTLIMFLILKHFLF).

Belongs to the ATPase B chain family. In terms of assembly, F-type ATPases have 2 components, F(1) - the catalytic core - and F(0) - the membrane proton channel. F(1) has five subunits: alpha(3), beta(3), gamma(1), delta(1), epsilon(1). F(0) has three main subunits: a(1), b(2) and c(10-14). The alpha and beta chains form an alternating ring which encloses part of the gamma chain. F(1) is attached to F(0) by a central stalk formed by the gamma and epsilon chains, while a peripheral stalk is formed by the delta and b chains.

The protein resides in the cell membrane. Its function is as follows. F(1)F(0) ATP synthase produces ATP from ADP in the presence of a proton or sodium gradient. F-type ATPases consist of two structural domains, F(1) containing the extramembraneous catalytic core and F(0) containing the membrane proton channel, linked together by a central stalk and a peripheral stalk. During catalysis, ATP synthesis in the catalytic domain of F(1) is coupled via a rotary mechanism of the central stalk subunits to proton translocation. Functionally, component of the F(0) channel, it forms part of the peripheral stalk, linking F(1) to F(0). The sequence is that of ATP synthase subunit b from Alkaliphilus oremlandii (strain OhILAs) (Clostridium oremlandii (strain OhILAs)).